Consider the following 504-residue polypeptide: Cytoplasmic dynein 1 light intermediate chain 1 (504 aa).

35 to 42 (GDPTSGKS) contacts ATP. Composition is skewed to low complexity over residues 167–189 (TTTA…TNKT), 392–425 (NSPS…NTPL), and 437–446 (SSNNPVAASP). Disordered regions lie at residues 167–195 (TTTA…TTDK), 383–446 (LDND…AASP), and 464–504 (DKTS…QQKK). Residues 464-473 (DKTSSRKDLK) show a composition bias toward basic and acidic residues. Over residues 475-487 (SLASPPTTSVSSN) the composition is skewed to polar residues. A compositionally biased stretch (basic and acidic residues) spans 488-504 (AREDAKKELDKLKQQKK).

It belongs to the dynein light intermediate chain family. Homodimer. The cytoplasmic dynein 1 complex consists of two catalytic heavy chains (HCs) and a number of non-catalytic subunits presented by intermediate chains (ICs), light intermediate chains (LICs) and light chains (LCs).

It localises to the cytoplasm. The protein resides in the cytoskeleton. Functionally, acts as one of several non-catalytic accessory components of the cytoplasmic dynein 1 complex that are thought to be involved in linking dynein to cargos and to adapter proteins that regulate dynein function. Cytoplasmic dynein 1 acts as a motor for the intracellular retrograde motility of vesicles and organelles along microtubules. May play a role in binding dynein to membranous organelles or chromosomes. The sequence is that of Cytoplasmic dynein 1 light intermediate chain 1 (dync1li1) from Dictyostelium discoideum (Social amoeba).